A 359-amino-acid chain; its full sequence is RNA-binding protein 4B (359 aa).

RRM domains are found at residues 2-72 and 78-148; these read VKLF…ASKN and TKLH…LSTS. Residues 160–177 form a CCHC-type zinc finger; it reads SGCYRCGKEGHWSKECPV. Residues 196–359 are interaction with TNPO3; that stretch reads AVRPPYTMGY…YVDRARYSAF (164 aa).

As to quaternary structure, interacts with TNPO3, which may mediate nuclear import of the protein.

Its subcellular location is the nucleus. It localises to the nucleolus. Functionally, required for the translational activation of PER1 mRNA in response to circadian clock. Binds directly to the 3'-UTR of the PER1 mRNA. The protein is RNA-binding protein 4B (RBM4B) of Sus scrofa (Pig).